We begin with the raw amino-acid sequence, 586 residues long: Eukaryotic translation initiation factor 3 subunit D (586 aa).

A disordered region spans residues serine 102–serine 176. A compositionally biased stretch (basic and acidic residues) spans glycine 162 to glutamate 174. The tract at residues serine 301–proline 315 is RNA gate. A disordered region spans residues glutamate 567–glutamate 586.

It belongs to the eIF-3 subunit D family. Component of the eukaryotic translation initiation factor 3 (eIF-3) complex.

The protein localises to the cytoplasm. Its function is as follows. mRNA cap-binding component of the eukaryotic translation initiation factor 3 (eIF-3) complex, which is involved in protein synthesis of a specialized repertoire of mRNAs and, together with other initiation factors, stimulates binding of mRNA and methionyl-tRNAi to the 40S ribosome. The eIF-3 complex specifically targets and initiates translation of a subset of mRNAs involved in cell proliferation. In the eIF-3 complex, eif3d specifically recognizes and binds the 7-methylguanosine cap of a subset of mRNAs. The chain is Eukaryotic translation initiation factor 3 subunit D from Aspergillus niger (strain ATCC MYA-4892 / CBS 513.88 / FGSC A1513).